The chain runs to 919 residues: Isoleucine--tRNA ligase (919 aa).

Positions 57–67 (PYANGHIHIGT) match the 'HIGH' region motif. Glu-553 lines the L-isoleucyl-5'-AMP pocket. Positions 594–598 (KMSKS) match the 'KMSKS' region motif. An ATP-binding site is contributed by Lys-597. Zn(2+) is bound by residues Cys-887, Cys-890, Cys-907, and Cys-910.

It belongs to the class-I aminoacyl-tRNA synthetase family. IleS type 1 subfamily. As to quaternary structure, monomer. Zn(2+) is required as a cofactor.

Its subcellular location is the cytoplasm. The catalysed reaction is tRNA(Ile) + L-isoleucine + ATP = L-isoleucyl-tRNA(Ile) + AMP + diphosphate. Catalyzes the attachment of isoleucine to tRNA(Ile). As IleRS can inadvertently accommodate and process structurally similar amino acids such as valine, to avoid such errors it has two additional distinct tRNA(Ile)-dependent editing activities. One activity is designated as 'pretransfer' editing and involves the hydrolysis of activated Val-AMP. The other activity is designated 'posttransfer' editing and involves deacylation of mischarged Val-tRNA(Ile). This chain is Isoleucine--tRNA ligase, found in Thermotoga maritima (strain ATCC 43589 / DSM 3109 / JCM 10099 / NBRC 100826 / MSB8).